The chain runs to 292 residues: Homoserine kinase (292 aa).

An ATP-binding site is contributed by 81-91 (RPRSGLGSSGA).

The protein belongs to the GHMP kinase family. Homoserine kinase subfamily.

The protein localises to the cytoplasm. It catalyses the reaction L-homoserine + ATP = O-phospho-L-homoserine + ADP + H(+). It functions in the pathway amino-acid biosynthesis; L-threonine biosynthesis; L-threonine from L-aspartate: step 4/5. In terms of biological role, catalyzes the ATP-dependent phosphorylation of L-homoserine to L-homoserine phosphate. This chain is Homoserine kinase, found in Thermococcus gammatolerans (strain DSM 15229 / JCM 11827 / EJ3).